A 406-amino-acid chain; its full sequence is Tryptophan synthase beta chain (406 aa).

Lys99 carries the post-translational modification N6-(pyridoxal phosphate)lysine.

Belongs to the TrpB family. Tetramer of two alpha and two beta chains. It depends on pyridoxal 5'-phosphate as a cofactor.

The enzyme catalyses (1S,2R)-1-C-(indol-3-yl)glycerol 3-phosphate + L-serine = D-glyceraldehyde 3-phosphate + L-tryptophan + H2O. Its pathway is amino-acid biosynthesis; L-tryptophan biosynthesis; L-tryptophan from chorismate: step 5/5. Its function is as follows. The beta subunit is responsible for the synthesis of L-tryptophan from indole and L-serine. This chain is Tryptophan synthase beta chain, found in Chelativorans sp. (strain BNC1).